Consider the following 491-residue polypeptide: Polybrominated aromatic compounds synthase (491 aa).

Cys-437 is a heme binding site.

Belongs to the cytochrome P450 family. Heme is required as a cofactor.

Functionally, cytochrome P450 protein involved in the biosynthesis of polybrominated aromatic organic compounds. In the presence of ferredoxin, ferredoxin reductase and NADH, catalyzes the coupling of bromophenols and bromopyrroles, forming various polybrominated biphenyls and hydroxylated polybrominated diphenyl ethers (OH-BDE). Can also mediate the heterocoupling of 3,5-dibromocatechol. Can also use chlorinated phenolic substrates. 2,3,4-tribromopyrrole could be the physiological substrate. The chain is Polybrominated aromatic compounds synthase from Pseudoalteromonas luteoviolacea (strain 2ta16).